Consider the following 240-residue polypeptide: Ribonuclease PH (240 aa).

Phosphate contacts are provided by residues Arg-86 and 124-126 (GTR).

The protein belongs to the RNase PH family. Homohexameric ring arranged as a trimer of dimers.

It carries out the reaction tRNA(n+1) + phosphate = tRNA(n) + a ribonucleoside 5'-diphosphate. Phosphorolytic 3'-5' exoribonuclease that plays an important role in tRNA 3'-end maturation. Removes nucleotide residues following the 3'-CCA terminus of tRNAs; can also add nucleotides to the ends of RNA molecules by using nucleoside diphosphates as substrates, but this may not be physiologically important. Probably plays a role in initiation of 16S rRNA degradation (leading to ribosome degradation) during starvation. The sequence is that of Ribonuclease PH from Rickettsia prowazekii (strain Madrid E).